The chain runs to 36 residues: MSDINATRLPVFSLPVFFPFVSDDIQAVLTRGESLC.

Positions 1–10 (MSDINATRLP) are excised as a propeptide. A cross-link (cyclopeptide (Val-Pro)) is located at residues 11–19 (VFSLPVFFP). Residues 20-36 (FVSDDIQAVLTRGESLC) constitute a propeptide that is removed on maturation.

This sequence belongs to the MSDIN fungal toxin family. Post-translationally, processed by the macrocyclase-peptidase enzyme POPB to yield a toxic cyclic nonapeptide. POPB first removes 10 residues from the N-terminus. Conformational trapping of the remaining peptide forces the enzyme to release this intermediate rather than proceed to macrocyclization. The enzyme rebinds the remaining peptide in a different conformation and catalyzes macrocyclization of the N-terminal 9 residues. As to expression, expressed in basidiocarps.

Its function is as follows. Cyclic nonapeptide that belongs to the MSDIN-like toxin family responsible for a large number of food poisoning cases and deaths. This chain is Amanexitide proprotein 2, found in Amanita exitialis (Guangzhou destroying angel).